A 313-amino-acid chain; its full sequence is WUSCHEL-related homeobox 5 (313 aa).

The tract at residues 1–32 is disordered; sequence METTTTTLGGGGGGRAGGFSDPPSPLSPPLSP. Residues 8-17 are compositionally biased toward gly residues; that stretch reads LGGGGGGRAG. A compositionally biased stretch (pro residues) spans 22–31; that stretch reads PPSPLSPPLS. Residues 40-104 constitute a DNA-binding region (homeobox; WUS-type); sequence LANARWTPTK…NHKARQRQKQ (65 aa). Disordered regions lie at residues 224-247 and 271-313; these read AAGR…GRET and CAAV…SGGR. Residues 271-301 show a composition bias toward low complexity; it reads CAAVSPTTPSASASFSWESESSDSPSSEAPP.

This sequence belongs to the WUS homeobox family.

Its subcellular location is the nucleus. Transcription factor which may be involved in developmental processes. This is WUSCHEL-related homeobox 5 (WOX5) from Oryza sativa subsp. japonica (Rice).